A 179-amino-acid polypeptide reads, in one-letter code: Large ribosomal subunit protein uL5 (179 aa).

This sequence belongs to the universal ribosomal protein uL5 family. As to quaternary structure, part of the 50S ribosomal subunit; part of the 5S rRNA/L5/L18/L25 subcomplex. Contacts the 5S rRNA and the P site tRNA. Forms a bridge to the 30S subunit in the 70S ribosome.

In terms of biological role, this is one of the proteins that bind and probably mediate the attachment of the 5S RNA into the large ribosomal subunit, where it forms part of the central protuberance. In the 70S ribosome it contacts protein S13 of the 30S subunit (bridge B1b), connecting the 2 subunits; this bridge is implicated in subunit movement. Contacts the P site tRNA; the 5S rRNA and some of its associated proteins might help stabilize positioning of ribosome-bound tRNAs. This chain is Large ribosomal subunit protein uL5, found in Prochlorococcus marinus (strain SARG / CCMP1375 / SS120).